Here is a 394-residue protein sequence, read N- to C-terminus: 4-hydroxyphenylpyruvate dioxygenase (394 aa).

VOC domains follow at residues 27–161 (GYDH…LIER) and 193–351 (HIDH…LFTK). Fe cation-binding residues include histidine 196, histidine 279, and glutamate 362.

The protein belongs to the 4HPPD family. Fe cation is required as a cofactor.

It carries out the reaction 3-(4-hydroxyphenyl)pyruvate + O2 = homogentisate + CO2. It participates in amino-acid degradation; L-phenylalanine degradation; acetoacetate and fumarate from L-phenylalanine: step 3/6. This chain is 4-hydroxyphenylpyruvate dioxygenase, found in Yarrowia lipolytica (strain CLIB 122 / E 150) (Yeast).